The sequence spans 643 residues: Inner kinetochore subunit cnp3 (643 aa).

Disordered stretches follow at residues 55 to 209 (SIHL…AFPD) and 224 to 386 (SIKD…QSDS). Composition is skewed to low complexity over residues 85 to 97 (AASD…SSSD) and 104 to 125 (DIPS…GSSG). Positions 166-185 (DFSRIKASPDRKKFEPRRST) are enriched in basic and acidic residues. Polar residues-rich tracts occupy residues 235–261 (YIQT…PSKQ), 295–304 (LNRSLANNSQ), and 313–322 (KPLQESSINS). Composition is skewed to basic residues over residues 332–341 (VKRKRGRPRK) and 360–370 (GAKKPAIRNAK). Residues 333 to 345 (KRKRGRPRKNKLE) constitute a DNA-binding region (a.T hook).

It belongs to the CENP-C/MIF2 family. In terms of assembly, component of the inner kinetochore constitutive centromere-associated network (CCAN) (also known as central kinetochore Sim4 complex in fission yeast), which is composed of at least cnl2, cnp3, cnp20, fta1, fta2, fta3, fta4, fta6, fta7, mal2, mhf1, mhf2, mis6, mis15, mis17, sim4 and wip1.

The protein resides in the nucleus. Its subcellular location is the nucleoplasm. Functionally, component of the kinetochore, a multiprotein complex that assembles on centromeric DNA and attaches chromosomes to spindle microtubules, mediating chromosome segregation and sister chromatid segregation during meiosis and mitosis. Component of the inner kinetochore constitutive centromere-associated network (CCAN), which serves as a structural platform for outer kinetochore assembly. The chain is Inner kinetochore subunit cnp3 (cnp3) from Schizosaccharomyces pombe (strain 972 / ATCC 24843) (Fission yeast).